Reading from the N-terminus, the 364-residue chain is MLIFPLINDTSRKIIHIDMDAFFAAVEERDNPALKGKPVVIGKDPRETGGRGVVSTCNYEARKYGIHSAMSSKEAYERCPKAIFISGNYEKYRTVGDQIRRIFKRYTDVVEPMSIDEAYLDVTDNKLGIKSAVKIAKLIQHDIWKEVGLTCSAGVSYNKFLAKLASDFEKPHGLTLVLKEDALCFLAKLPIEKFHGVGKKSVEKLHDMGIYTGQDLLAVPEMTLIDHFGRFGFDLYRKARGISNSPVKSDRIRKSIGSERTYAKLLYQETDIKAEISKNAKRVAALLQDHKKLGKTIVLKVRYADFTTLTKRVTLPELTRNAAQIEQVAGDIFDSLSENPAGIRLLGVTMTNLEDKVADISLDL.

A UmuC domain is found at 14–198 (IIHIDMDAFF…LPIEKFHGVG (185 aa)). Residues Asp-18 and Asp-116 each coordinate Mg(2+). Glu-117 is a catalytic residue.

Belongs to the DNA polymerase type-Y family. As to quaternary structure, monomer. Mg(2+) serves as cofactor.

It is found in the cytoplasm. It catalyses the reaction DNA(n) + a 2'-deoxyribonucleoside 5'-triphosphate = DNA(n+1) + diphosphate. In terms of biological role, poorly processive, error-prone DNA polymerase involved in untargeted mutagenesis. Copies undamaged DNA at stalled replication forks, which arise in vivo from mismatched or misaligned primer ends. These misaligned primers can be extended by PolIV. Exhibits no 3'-5' exonuclease (proofreading) activity. May be involved in translesional synthesis, in conjunction with the beta clamp from PolIII. The polypeptide is DNA polymerase IV (Streptococcus pyogenes serotype M2 (strain MGAS10270)).